The chain runs to 187 residues: uncharacterized protein (187 aa).

Belongs to the isochorismatase family.

This is an uncharacterized protein from Bacillus subtilis (strain 168).